A 367-amino-acid chain; its full sequence is Leu/Ile/Val-binding protein (367 aa).

The signal sequence occupies residues 1–23 (MNMKGKALLAGCIALSLSNMAFA). Cys76 and Cys101 are oxidised to a cystine.

The protein belongs to the leucine-binding protein family.

Its subcellular location is the periplasm. This protein is a component of the leucine, isoleucine, valine, (threonine) transport system, which is one of the two periplasmic binding protein-dependent transport systems of the high-affinity transport of the branched-chain amino acids. The protein is Leu/Ile/Val-binding protein (livJ) of Citrobacter freundii.